Here is a 207-residue protein sequence, read N- to C-terminus: C-type lectin domain family 2 member D11 (207 aa).

Residues 1–44 lie on the Cytoplasmic side of the membrane; the sequence is MSAKKASQPMLNTTGSLQEGEMGKMFHGKCLRIVSPESPAKLYC. A phosphoserine mark is found at serine 7 and serine 16. The chain crosses the membrane as a helical; Signal-anchor for type II membrane protein span at residues 45–65; the sequence is CYGVIMVLSVAVVALSVALSV. Over 66–207 the chain is Extracellular; sequence KMTPQISTIN…LQCKTPFSPM (142 aa). Positions 87 to 198 constitute a C-type lectin domain; that stretch reads VGNKCFYFSE…SCSKLNSYSL (112 aa). An N-linked (GlcNAc...) asparagine glycan is attached at asparagine 100.

It localises to the cell membrane. Receptor for KLRB1B that protects target cells against natural killer cell-mediated lysis. The polypeptide is C-type lectin domain family 2 member D11 (Clec2d11) (Rattus norvegicus (Rat)).